Consider the following 581-residue polypeptide: MESLSLSLLLLVSWLQGSQCAAAKELSCQEITVPLCKDIGYNYTYMPNQFNHDTQDEAGMEVHQFWPLVVIHCSPDLKFFLCSMYTPICLEDYKKPLPPCRSVCERARAGCAPLMRQYGFAWPDRMRCDRLPEQGNPDTLCMDYYNRTEQTTAAPSHPEPPKPPARSVPKGRTRVEPPRSRSRATGCESGCQCRAPMVQVSNERHPLYNRVRTGQIPNCAMPCHNPFFSPEERTFTEFWIGLWSVLCFASTFATVSTFLIDMERFKYPERPIIFLSACYLLVSTGYLIRLIAGHEKVACSRGELDLEHIIHYETTGPALCTLVFLLIYFFGMASSIWWVILSLTWFLAAGMKWGNEAIAGYSQYFHLAAWLVPSIKSIAVLALSSVDGDPVAGICFVGNQNLDNLRGFVLAPLVIYLFIGSMFLLAGFVSLFRIRSVIKQGGTKTDKLEKLMIRIGIFSVLYTVPATIVVACFFYEQHNRQGWEVAHNCNSCQPEMAQPHRPDYAVFMLKYFMCLVVGITSGVWIWSGKTLESWRAFCTRCCWGSKATGGSMYSDVSTGLTWRSGTGSSVSCPKQMPLSQV.

Residues 1–23 form the signal peptide; sequence MESLSLSLLLLVSWLQGSQCAAA. Residues 24 to 144 form the FZ domain; it reads KELSCQEITV…GNPDTLCMDY (121 aa). Residues 24–239 lie on the Extracellular side of the membrane; sequence KELSCQEITV…PEERTFTEFW (216 aa). 5 disulfides stabilise this stretch: C28–C89, C36–C82, C73–C111, C100–C141, and C104–C128. Residue N42 is glycosylated (N-linked (GlcNAc...) asparagine). 64–71 contacts hexadecanoate; sequence QFWPLVVI. Residues 88-93 form a wnt-binding region; that stretch reads ICLEDY. The tract at residues 140–146 is wnt-binding; sequence LCMDYYN. A glycan (N-linked (GlcNAc...) asparagine) is linked at N146. A disordered region spans residues 151-189; the sequence is TTAAPSHPEPPKPPARSVPKGRTRVEPPRSRSRATGCES. The segment covering 157-166 has biased composition (pro residues); that stretch reads HPEPPKPPAR. Residues 240–260 form a helical membrane-spanning segment; sequence IGLWSVLCFASTFATVSTFLI. Residues 261-271 are Cytoplasmic-facing; it reads DMERFKYPERP. The chain crosses the membrane as a helical span at residues 272 to 292; sequence IIFLSACYLLVSTGYLIRLIA. Topologically, residues 293–320 are extracellular; sequence GHEKVACSRGELDLEHIIHYETTGPALC. The chain crosses the membrane as a helical span at residues 321–341; it reads TLVFLLIYFFGMASSIWWVIL. Topologically, residues 342 to 377 are cytoplasmic; sequence SLTWFLAAGMKWGNEAIAGYSQYFHLAAWLVPSIKS. The helical transmembrane segment at 378–398 threads the bilayer; that stretch reads IAVLALSSVDGDPVAGICFVG. The Extracellular segment spans residues 399-407; sequence NQNLDNLRG. A helical transmembrane segment spans residues 408–428; that stretch reads FVLAPLVIYLFIGSMFLLAGF. Topologically, residues 429 to 454 are cytoplasmic; it reads VSLFRIRSVIKQGGTKTDKLEKLMIR. The helical transmembrane segment at 455–475 threads the bilayer; the sequence is IGIFSVLYTVPATIVVACFFY. Over 476–505 the chain is Extracellular; that stretch reads EQHNRQGWEVAHNCNSCQPEMAQPHRPDYA. The helical transmembrane segment at 506–526 threads the bilayer; it reads VFMLKYFMCLVVGITSGVWIW. Residues 527 to 581 are Cytoplasmic-facing; the sequence is SGKTLESWRAFCTRCCWGSKATGGSMYSDVSTGLTWRSGTGSSVSCPKQMPLSQV. The Lys-Thr-X-X-X-Trp motif, mediates interaction with the PDZ domain of Dvl family members motif lies at 529 to 534; the sequence is KTLESW. Residues 579–581 carry the PDZ-binding motif; it reads SQV.

This sequence belongs to the G-protein coupled receptor Fz/Smo family. Interacts with lypd6 and the interaction is strongly enhanced by wnt3a.

It localises to the membrane. The protein resides in the cell membrane. In terms of biological role, receptor for Wnt proteins. Most of frizzled receptors are coupled to the beta-catenin canonical signaling pathway, which leads to the activation of disheveled proteins, inhibition of GSK-3 kinase, nuclear accumulation of beta-catenin and activation of Wnt target genes. A second signaling pathway involving PKC and calcium fluxes has been seen for some family members, but it is not yet clear if it represents a distinct pathway or if it can be integrated in the canonical pathway, as PKC seems to be required for Wnt-mediated inactivation of GSK-3 kinase. Both pathways seem to involve interactions with G-proteins. May be involved in transduction and intercellular transmission of polarity information during tissue morphogenesis and/or in differentiated tissues. Activation by Wnt8, Wnt5A or Wnt3A induces expression of beta-catenin target genes. Displays an axis-inducing activity. The protein is Frizzled-8 (fzd8) of Xenopus laevis (African clawed frog).